The chain runs to 286 residues: 33 kDa chaperonin (286 aa).

2 disulfide bridges follow: cysteine 225–cysteine 227 and cysteine 258–cysteine 261.

This sequence belongs to the HSP33 family. In terms of processing, under oxidizing conditions two disulfide bonds are formed involving the reactive cysteines. Under reducing conditions zinc is bound to the reactive cysteines and the protein is inactive.

It localises to the cytoplasm. Its function is as follows. Redox regulated molecular chaperone. Protects both thermally unfolding and oxidatively damaged proteins from irreversible aggregation. Plays an important role in the bacterial defense system toward oxidative stress. This Shewanella sediminis (strain HAW-EB3) protein is 33 kDa chaperonin.